We begin with the raw amino-acid sequence, 217 residues long: Protein DJ-1alpha (217 aa).

C133 (nucleophile) is an active-site residue. C133 bears the Cysteine sulfinic acid (-SO2H); alternate mark.

In terms of tissue distribution, expressed in testis (at protein level).

It is found in the cytoplasm. Its subcellular location is the nucleus. The protein resides in the mitochondrion. Its function is as follows. Plays an important role in cell protection against oxidative stress and cell death acting as oxidative stress sensor. Does not play a role in methylglyoxal detoxification. This Drosophila melanogaster (Fruit fly) protein is Protein DJ-1alpha.